A 148-amino-acid polypeptide reads, in one-letter code: uncharacterized protein (148 aa).

Residues 7–29 (MLILMSLVKIVLTCLPTGVIEWL) traverse the membrane as a helical segment.

The protein resides in the membrane. This is an uncharacterized protein from Bacillus subtilis (strain 168).